Reading from the N-terminus, the 65-residue chain is Large ribosomal subunit protein bL35 (65 aa).

A compositionally biased stretch (basic and acidic residues) spans 1-10; it reads MPKMKTDRGA. The tract at residues 1–24 is disordered; it reads MPKMKTDRGAAKRFKKTGSGGFKC.

It belongs to the bacterial ribosomal protein bL35 family.

This is Large ribosomal subunit protein bL35 from Tolumonas auensis (strain DSM 9187 / NBRC 110442 / TA 4).